The sequence spans 452 residues: Major royal jelly protein 2 (452 aa).

The N-terminal stretch at 1 to 17 (MTRWLFMVACLGIACQG) is a signal peptide. 2 N-linked (GlcNAc...) asparagine glycosylation sites follow: Asn-145 and Asn-178. Residues 416 to 452 (NNNQNDNIQNTNNQNDNNQKNNKKNANNQKNNNQNDN) form a disordered region.

N-linked core structure contains mannose (which consists of 8-alpha-mannosyl residues, one beta-mannosyl residue, and chitobiose). Secreted from the hypopharyngeal glands of the worker honey bee (at protein level); expression peaks at 12 days post eclosion. Expressed in the brains of adult worker bees peaking at 12 days post eclosion (at protein level). Expressed in the spermatheca of adult queen bees (at protein level); Expression levels are higher in mated queens than in virgin queens.

The protein resides in the secreted. Highly abundant protein component of royal jelly, a substance produced in the hypopharyngeal gland containing proteins, free amino acids, fatty acids, sugars and other nutrients, which is fed to developing larvae by worker nurse bees. Major royal jelly proteins (MRJPs) are high in essential amino acids and probably have a nutritional function in larval food. All larvae are fed some royal jelly (also known as worker jelly) early in their development but it forms the principal source of nutrition for larvae destined to become queen bees. Produced in the spermatheca of adult queen bees, along with other major royal jelly proteins, where it may act as a nutrient supply for sperm stored by mated queens, or be involved in energy metabolism. The chain is Major royal jelly protein 2 from Apis mellifera (Honeybee).